Consider the following 142-residue polypeptide: Small ribosomal subunit protein uS8c (142 aa).

This sequence belongs to the universal ribosomal protein uS8 family. As to quaternary structure, part of the 30S ribosomal subunit.

It is found in the plastid. Its function is as follows. One of the primary rRNA binding proteins, it binds directly to 16S rRNA central domain where it helps coordinate assembly of the platform of the 30S subunit. The chain is Small ribosomal subunit protein uS8c (rps8) from Euglena longa (Euglenophycean alga).